The following is a 61-amino-acid chain: UPF0337 protein LMOf2365_2190 (61 aa).

Residues Met1–Glu61 are disordered.

It belongs to the UPF0337 (CsbD) family.

In Listeria monocytogenes serotype 4b (strain F2365), this protein is UPF0337 protein LMOf2365_2190.